The chain runs to 171 residues: Putative RING finger protein 027R (171 aa).

The segment at 121–163 adopts an RING-type zinc-finger fold; the sequence is CAVCMTNPVWVDFVWSCKHISTCIKCLKMLSRGSNGFKCPICR.

This sequence belongs to the IIV-6 157L family.

This chain is Putative RING finger protein 027R, found in Aedes vexans (Inland floodwater mosquito).